The sequence spans 681 residues: Probable L-type lectin-domain containing receptor kinase S.7 (681 aa).

An N-terminal signal peptide occupies residues 1–21 (MSLSRKLLVIFFTWITALSMS). Over 22–305 (KPIFVSSDNM…PSKKRRHRHN (284 aa)) the chain is Extracellular. Positions 30 to 265 (NMNFTFKSFT…IHLIENWSFK (236 aa)) are legume-lectin like. N32, N42, N86, N121, N135, N261, and N281 each carry an N-linked (GlcNAc...) asparagine glycan. A helical membrane pass occupies residues 306 to 326 (LAIGLGISCPVLICLALFVFG). Over 327-681 (YFTLKKWKSV…EGDSIVYVVS (355 aa)) the chain is Cytoplasmic. The Protein kinase domain maps to 365 to 643 (FHSSRVIGRG…RVLQILNNEI (279 aa)). Residues 371-379 (IGRGAFGNV) and K394 each bind ATP. Catalysis depends on D493, which acts as the Proton acceptor.

In the C-terminal section; belongs to the protein kinase superfamily. Ser/Thr protein kinase family. This sequence in the N-terminal section; belongs to the leguminous lectin family.

It localises to the cell membrane. The enzyme catalyses L-seryl-[protein] + ATP = O-phospho-L-seryl-[protein] + ADP + H(+). It carries out the reaction L-threonyl-[protein] + ATP = O-phospho-L-threonyl-[protein] + ADP + H(+). Its function is as follows. Involved in resistance response to the pathogenic oomycetes Phytophthora infestans and Phytophthora capsici. This Arabidopsis thaliana (Mouse-ear cress) protein is Probable L-type lectin-domain containing receptor kinase S.7.